We begin with the raw amino-acid sequence, 416 residues long: Enterobactin exporter EntS (416 aa).

The Cytoplasmic portion of the chain corresponds to 1-21 (MNKQSWLLNLSLLKTHPAFRA). The chain crosses the membrane as a helical span at residues 22–42 (VFLARFISIVSLGLLGVAVPV). Residues 43 to 55 (QIQMMTHSTWQVG) lie on the Periplasmic side of the membrane. Residues 56–76 (LSVTLTGGAMFVGLMVGGVLA) traverse the membrane as a helical segment. The Cytoplasmic portion of the chain corresponds to 77 to 83 (DRYERKK). The helical transmembrane segment at 84–104 (VILLARGTCGIGFIGLCLNAL) threads the bilayer. Topologically, residues 105–109 (LPEPS) are periplasmic. A helical membrane pass occupies residues 110–130 (LLAIYLLGLWDGFFASLGVTA). The Cytoplasmic portion of the chain corresponds to 131-156 (LLAATPALVGRENLMQAGAITMLTVR). The chain crosses the membrane as a helical span at residues 157–177 (LGSVISPMIGGLLLATGGVAW). Residue Asn178 is a topological domain, periplasmic. Residues 179–199 (YGLAAAGTFITLLPLLSLPAL) form a helical membrane-spanning segment. Residues 200 to 218 (PPPPQPREHPLKSLLAGFR) are Cytoplasmic-facing. A helical membrane pass occupies residues 219-239 (FLLASPLVGGIALLGGLLTMA). Residues 240-256 (SAVRVLYPALADNWQMS) lie on the Periplasmic side of the membrane. A helical transmembrane segment spans residues 257–277 (AAQIGFLYAAIPLGAAIGALT). The Cytoplasmic segment spans residues 278–287 (SGKLAHSARP). Residues 288–307 (GLLMLLSTLGSFLAIGLFGL) traverse the membrane as a helical segment. At 308-313 (MPMWIL) the chain is on the periplasmic side. The chain crosses the membrane as a helical span at residues 314-336 (GVVCLALFGWLSAVSSLLQYTML). Over 337-356 (QTQTPEAMLGRINGLWTAQN) the chain is Cytoplasmic. Residues 357–377 (VTGDAIGAALLGGLGAMMTPV) traverse the membrane as a helical segment. Position 378 (Ala378) is a topological domain, periplasmic. The chain crosses the membrane as a helical span at residues 379–399 (SASASGFGLLIIGVLLLLVLV). Over 400 to 416 (ELRHFRQTPPQVTASDS) the chain is Cytoplasmic.

It belongs to the major facilitator superfamily. EntS (TC 2.A.1.38) family.

Its subcellular location is the cell inner membrane. Functionally, component of an export pathway for enterobactin. This is Enterobactin exporter EntS from Escherichia coli (strain K12 / MC4100 / BW2952).